Here is a 183-residue protein sequence, read N- to C-terminus: Protein Syd (183 aa).

Belongs to the Syd family.

The protein resides in the cell inner membrane. In terms of biological role, interacts with the SecY protein in vivo. May bind preferentially to an uncomplexed state of SecY, thus functioning either as a chelating agent for excess SecY in the cell or as a regulatory factor that negatively controls the translocase function. This is Protein Syd from Yersinia pestis bv. Antiqua (strain Antiqua).